Here is a 271-residue protein sequence, read N- to C-terminus: Phosphate import ATP-binding protein PstB 2 (271 aa).

An ABC transporter domain is found at 25–266 (MATEDLHVYY…PQQKQTEDYI (242 aa)). 57 to 64 (GPSGCGKS) provides a ligand contact to ATP.

Belongs to the ABC transporter superfamily. Phosphate importer (TC 3.A.1.7) family. As to quaternary structure, the complex is composed of two ATP-binding proteins (PstB), two transmembrane proteins (PstC and PstA) and a solute-binding protein (PstS).

It is found in the cell membrane. It carries out the reaction phosphate(out) + ATP + H2O = ADP + 2 phosphate(in) + H(+). Part of the ABC transporter complex PstSACB involved in phosphate import. Responsible for energy coupling to the transport system. The sequence is that of Phosphate import ATP-binding protein PstB 2 from Listeria monocytogenes serotype 4b (strain F2365).